A 957-amino-acid polypeptide reads, in one-letter code: Glycine dehydrogenase (decarboxylating) (957 aa).

Residue Lys708 is modified to N6-(pyridoxal phosphate)lysine.

It belongs to the GcvP family. In terms of assembly, the glycine cleavage system is composed of four proteins: P, T, L and H. Pyridoxal 5'-phosphate is required as a cofactor.

The enzyme catalyses N(6)-[(R)-lipoyl]-L-lysyl-[glycine-cleavage complex H protein] + glycine + H(+) = N(6)-[(R)-S(8)-aminomethyldihydrolipoyl]-L-lysyl-[glycine-cleavage complex H protein] + CO2. The glycine cleavage system catalyzes the degradation of glycine. The P protein binds the alpha-amino group of glycine through its pyridoxal phosphate cofactor; CO(2) is released and the remaining methylamine moiety is then transferred to the lipoamide cofactor of the H protein. This is Glycine dehydrogenase (decarboxylating) from Salmonella typhimurium (strain LT2 / SGSC1412 / ATCC 700720).